Here is an 88-residue protein sequence, read N- to C-terminus: Large ribosomal subunit protein bL27 (88 aa).

Residues 1-21 (MAHKKGASSSRNGRDSNAQRL) form a disordered region. Over residues 7 to 19 (ASSSRNGRDSNAQ) the composition is skewed to polar residues.

It belongs to the bacterial ribosomal protein bL27 family.

In Frankia casuarinae (strain DSM 45818 / CECT 9043 / HFP020203 / CcI3), this protein is Large ribosomal subunit protein bL27.